Reading from the N-terminus, the 377-residue chain is Putative F-box protein At1g70380 (377 aa).

The F-box domain occupies 3-48; the sequence is NTSFETLALDMQIEILARLPLKYLMRCMCVSKKWASLIRGEDFRSA.

The protein is Putative F-box protein At1g70380 of Arabidopsis thaliana (Mouse-ear cress).